Consider the following 161-residue polypeptide: Abscisic acid receptor PYL11 (161 aa).

The segment at 3 to 154 is START-like; it reads TSQKYHTCGS…NLKSLAKLSE (152 aa). Abscisate is bound by residues K39, 68 to 73, 95 to 101, and E119; these read AEFSRE and RLVNYRS. The short motif at 64-68 is the Gate loop element; it reads SGLPA. The Latch loop signature appears at 94 to 96; that stretch reads HRL.

It belongs to the PYR/PYL/RCAR abscisic acid intracellular receptor family. In terms of assembly, homodimer. Binds ABA on one subunit only. Interacts with PP2Cs. Binds to CARs protein in an ABA-independent manner, both at the plasma membrane and in the nucleus. Interacts with I-2 and TOPP1.

The protein resides in the cytoplasm. It is found in the nucleus. Its subcellular location is the cell membrane. Its function is as follows. Receptor for abscisic acid (ABA) required for ABA-mediated responses such as stomatal closure and germination inhibition. Inhibits the activity of group-A protein phosphatases type 2C (PP2Cs) when activated by ABA. Suppresses the phosphatase activity of TOPP1 in a dose-dependent manner in vitro. This Arabidopsis thaliana (Mouse-ear cress) protein is Abscisic acid receptor PYL11 (PYL11).